A 387-amino-acid polypeptide reads, in one-letter code: Cystathionine beta-lyase (387 aa).

An N6-(pyridoxal phosphate)lysine modification is found at K204.

This sequence belongs to the trans-sulfuration enzymes family. As to quaternary structure, homotetramer. The cofactor is pyridoxal 5'-phosphate.

Its subcellular location is the cytoplasm. It catalyses the reaction L,L-cystathionine + H2O = L-homocysteine + pyruvate + NH4(+). It carries out the reaction an S-substituted L-cysteine + H2O = a thiol + pyruvate + NH4(+). The protein operates within amino-acid biosynthesis; L-methionine biosynthesis via de novo pathway; L-homocysteine from L-cystathionine: step 1/1. Functionally, catalyzes the cleavage of cystathionine to homocysteine, pyruvate and ammonia during methionine biosynthesis. This is Cystathionine beta-lyase (metC) from Coxiella burnetii (strain RSA 493 / Nine Mile phase I).